A 1097-amino-acid chain; its full sequence is Putative regulator of nonsense transcripts 1 (1097 aa).

Low complexity predominate over residues 42–53; sequence SQTQTQGHTQSQ. The tract at residues 42-67 is disordered; the sequence is SQTQTQGHTQSQLDNQLNGPDDGLHN. A Upf1 CH-rich domain is found at 96 to 254; that stretch reads TKDLPVHACR…NKLEELWKDN (159 aa). Zn(2+) contacts are provided by cysteine 104, cysteine 108, cysteine 119, serine 122, cysteine 127, histidine 137, histidine 141, cysteine 147, cysteine 165, cysteine 168, cysteine 191, and cysteine 195. A C3H region spans residues 104–137; the sequence is CRSYCGIHDPACVVYCNTSKKWFCNGRGNTSGSH. The CC/SHH/C stretch occupies residues 119-147; that stretch reads CNTSKKWFCNGRGNTSGSHIVNHLVRAKC. The interval 165–195 is C4; it reads CYNCGCRNVFLLGFIPAKADSVVVLLCRQPC. Residues glutamine 457, 474–481, tyrosine 683, and glutamate 813 each bind ATP; that span reads GPPGTGKT. The interval 977 to 998 is disordered; that stretch reads QGQTNGPAAGRGAMKGKSGRGG.

This sequence belongs to the DNA2/NAM7 helicase family.

It is found in the cytoplasm. It localises to the P-body. It catalyses the reaction ATP + H2O = ADP + phosphate + H(+). Its function is as follows. RNA-dependent helicase required for nonsense-mediated decay (NMD) of aberrant mRNAs containing premature stop codons and modulates the expression level of normal mRNAs. The formation of an rent1-rent2-rent3 surveillance complex is believed to activate NMD. The polypeptide is Putative regulator of nonsense transcripts 1 (rent1) (Takifugu rubripes (Japanese pufferfish)).